Consider the following 87-residue polypeptide: Phosphocarrier protein HPr (87 aa).

One can recognise an HPr domain in the interval 1–87 (MASKDFHIVA…AETMTKEGLA (87 aa)). His15 (pros-phosphohistidine intermediate) is an active-site residue. Residue Ser46 is modified to Phosphoserine; by HPrK/P.

This sequence belongs to the HPr family.

The protein localises to the cytoplasm. With respect to regulation, phosphorylation on Ser-46 inhibits the phosphoryl transfer from enzyme I to HPr. Functionally, general (non sugar-specific) component of the phosphoenolpyruvate-dependent sugar phosphotransferase system (sugar PTS). This major carbohydrate active-transport system catalyzes the phosphorylation of incoming sugar substrates concomitantly with their translocation across the cell membrane. The phosphoryl group from phosphoenolpyruvate (PEP) is transferred to the phosphoryl carrier protein HPr by enzyme I. Phospho-HPr then transfers it to the PTS EIIA domain. Its function is as follows. P-Ser-HPr interacts with the catabolite control protein A (CcpA), forming a complex that binds to DNA at the catabolite response elements cre, operator sites preceding a large number of catabolite-regulated genes. Thus, P-Ser-HPr is a corepressor in carbon catabolite repression (CCR), a mechanism that allows bacteria to coordinate and optimize the utilization of available carbon sources. P-Ser-HPr also plays a role in inducer exclusion, in which it probably interacts with several non-PTS permeases and inhibits their transport activity. This is Phosphocarrier protein HPr (ptsH) from Streptococcus salivarius.